The following is a 359-amino-acid chain: Protein FAM50 homolog (359 aa).

Disordered regions lie at residues 122 to 150 and 339 to 359; these read NLDD…EDQP and PYDP…KSKK. Residues 123-136 are compositionally biased toward acidic residues; sequence LDDDEEEEEEDDED. A compositionally biased stretch (basic and acidic residues) spans 137 to 150; that stretch reads HDKKQLKIKQEDQP.

The protein belongs to the FAM50 family.

The sequence is that of Protein FAM50 homolog from Drosophila melanogaster (Fruit fly).